Consider the following 199-residue polypeptide: Recombination protein RecR (199 aa).

The C4-type zinc finger occupies 57 to 72 (CSICGNFTDRDPCRLC). One can recognise a Toprim domain in the interval 80–175 (SCICVVEEAR…KVTRLAYGLP (96 aa)).

It belongs to the RecR family.

Its function is as follows. May play a role in DNA repair. It seems to be involved in an RecBC-independent recombinational process of DNA repair. It may act with RecF and RecO. This is Recombination protein RecR from Moorella thermoacetica (strain ATCC 39073 / JCM 9320).